We begin with the raw amino-acid sequence, 410 residues long: Phospho-N-acetylmuramoyl-pentapeptide-transferase (410 aa).

10 helical membrane-spanning segments follow: residues 23–43 (YITF…TIYG), 73–93 (TPTM…FLFA), 96–116 (HNIY…IGFV), 132–152 (GIFK…VLYF), 215–235 (WAWL…SNGA), 248–268 (TSAV…NIIF), 285–305 (VFIS…SFPA), 307–327 (VFMG…LAIA), 332–352 (ILIV…IIQV), and 387–407 (KIVT…IVTL).

This sequence belongs to the glycosyltransferase 4 family. MraY subfamily. Mg(2+) serves as cofactor.

The protein localises to the cell inner membrane. It catalyses the reaction UDP-N-acetyl-alpha-D-muramoyl-L-alanyl-gamma-D-glutamyl-meso-2,6-diaminopimeloyl-D-alanyl-D-alanine + di-trans,octa-cis-undecaprenyl phosphate = di-trans,octa-cis-undecaprenyl diphospho-N-acetyl-alpha-D-muramoyl-L-alanyl-D-glutamyl-meso-2,6-diaminopimeloyl-D-alanyl-D-alanine + UMP. It participates in cell wall biogenesis; peptidoglycan biosynthesis. Functionally, catalyzes the initial step of the lipid cycle reactions in the biosynthesis of the cell wall peptidoglycan: transfers peptidoglycan precursor phospho-MurNAc-pentapeptide from UDP-MurNAc-pentapeptide onto the lipid carrier undecaprenyl phosphate, yielding undecaprenyl-pyrophosphoryl-MurNAc-pentapeptide, known as lipid I. This Flavobacterium johnsoniae (strain ATCC 17061 / DSM 2064 / JCM 8514 / BCRC 14874 / CCUG 350202 / NBRC 14942 / NCIMB 11054 / UW101) (Cytophaga johnsonae) protein is Phospho-N-acetylmuramoyl-pentapeptide-transferase.